Consider the following 273-residue polypeptide: Dermonecrotic toxin LsaSicTox-alphaIB1bii (273 aa).

Residue His5 is part of the active site. Mg(2+) is bound by residues Glu25 and Asp27. Catalysis depends on His41, which acts as the Nucleophile. Intrachain disulfides connect Cys45/Cys51 and Cys47/Cys190. Mg(2+) is bound at residue Asp85.

It belongs to the arthropod phospholipase D family. Class II subfamily. Mg(2+) serves as cofactor. Expressed by the venom gland.

It is found in the secreted. The catalysed reaction is an N-(acyl)-sphingosylphosphocholine = an N-(acyl)-sphingosyl-1,3-cyclic phosphate + choline. It carries out the reaction an N-(acyl)-sphingosylphosphoethanolamine = an N-(acyl)-sphingosyl-1,3-cyclic phosphate + ethanolamine. It catalyses the reaction a 1-acyl-sn-glycero-3-phosphocholine = a 1-acyl-sn-glycero-2,3-cyclic phosphate + choline. The enzyme catalyses a 1-acyl-sn-glycero-3-phosphoethanolamine = a 1-acyl-sn-glycero-2,3-cyclic phosphate + ethanolamine. Dermonecrotic toxins cleave the phosphodiester linkage between the phosphate and headgroup of certain phospholipids (sphingolipid and lysolipid substrates), forming an alcohol (often choline) and a cyclic phosphate. This toxin acts on sphingomyelin (SM). It may also act on ceramide phosphoethanolamine (CPE), lysophosphatidylcholine (LPC) and lysophosphatidylethanolamine (LPE), but not on lysophosphatidylserine (LPS), and lysophosphatidylglycerol (LPG). It acts by transphosphatidylation, releasing exclusively cyclic phosphate products as second products. Induces dermonecrosis, hemolysis, increased vascular permeability, edema, inflammatory response, and platelet aggregation. The polypeptide is Dermonecrotic toxin LsaSicTox-alphaIB1bii (Loxosceles sabina (Tucson recluse spider)).